The primary structure comprises 178 residues: ATP-dependent protease subunit HslV (178 aa).

Threonine 7 is a catalytic residue. Na(+) is bound by residues glycine 162, cysteine 165, and threonine 168.

The protein belongs to the peptidase T1B family. HslV subfamily. In terms of assembly, a double ring-shaped homohexamer of HslV is capped on each side by a ring-shaped HslU homohexamer. The assembly of the HslU/HslV complex is dependent on binding of ATP.

The protein localises to the cytoplasm. The enzyme catalyses ATP-dependent cleavage of peptide bonds with broad specificity.. Allosterically activated by HslU binding. In terms of biological role, protease subunit of a proteasome-like degradation complex believed to be a general protein degrading machinery. This is ATP-dependent protease subunit HslV from Sulfurihydrogenibium sp. (strain YO3AOP1).